Consider the following 642-residue polypeptide: Uromodulin (642 aa).

An N-terminal signal peptide occupies residues 1 to 26 (MGQLSSLTSVWMVVVVTSWVIIAANI). Positions 32–64 (RSCSECHSNATCMEDGMVTTCSCLVGFTGSGFE) constitute an EGF-like 1 domain. 21 cysteine pairs are disulfide-bonded: C34/C43, C37/C52, C54/C65, C71/C85, C79/C94, C96/C108, C114/C128, C122/C137, C139/C150, C152/C163, C157/C172, C176/C269, C197/C284, C219/C257, C225/C289, C250/C258, C299/C308, C302/C317, C319/C348, C336/C426, and C367/C390. Residue N40 is glycosylated (N-linked (GlcNAc...) asparagine). The EGF-like 2; calcium-binding domain occupies 67 to 109 (DLDECAIPGAHNCSEGSSCMNTLGSYLCTCPDGFRLTPGLGCI). A glycan (N-linked (GlcNAc...) asparagine) is linked at N78. In terms of domain architecture, EGF-like 3; calcium-binding spans 110–151 (DVDECSEPGLSRCHALATCINNKGNYSCVCPAGYRGDGQHCE). N134 is a glycosylation site (N-linked (GlcNAc...) asparagine). Residues 152-173 (CSPGSCGPGLDCVPVGDALVCA) are beta hairpin. Residues 174-293 (DPCQEHRILD…CYLAYCTDPT (120 aa)) form a D10C region. N-linked (GlcNAc...) asparagine glycans are attached at residues N234 and N246. Residue N277 is glycosylated (N-linked (GlcNAc...) asparagine). Residues 294 to 325 (SVLGTCEECSVEEDCKSHDGMWSCQCKQDFNV) enclose the EGF-like 4 domain. N324 is a glycosylation site (N-linked (GlcNAc...) asparagine). Positions 335-430 (ECRPNDIKVS…KINFECSYPL (96 aa)) are ZP-N. A ZP domain is found at 335–590 (ECRPNDIKVS…PTCSGTRFRS (256 aa)). N-linked (GlcNAc...) asparagine glycans are attached at residues N397 and N448. Residues 431–454 (DMKVSLETSLQPIVSSLNISVGGT) are flexible ZP-N/ZP-C linker; important for secretion and polymerization into filaments. The segment at 455–465 (GMFTVRMALFQ) is internal hydrophobic patch (IHP). Residues 455 to 590 (GMFTVRMALF…PTCSGTRFRS (136 aa)) form a ZP-C region. Cystine bridges form between C507–C567, C528–C583, and C572–C579. N-linked (GlcNAc...) asparagine glycosylation occurs at N514. Residues 587-590 (RFRS) are essential for cleavage by HPN. Residues 599 to 607 (VLNLGPITR) are external hydrophobic patch (EHP); regulates polymerization into filaments. S620 is lipidated: GPI-anchor amidated serine. Positions 621 to 642 (SLGFLKVCLPLLLSATLTLMFQ) are cleaved as a propeptide — removed in mature form.

As to quaternary structure, homodimer that then polymerizes into long filaments. The filaments can additionally assemble laterally to form a sheet. The filaments consist of a zigzag-shaped backbone with laterally protruding arms which interact with bacterial adhesin fimH. Two fimH molecules can bind to a single UMOD monomer. N-glycosylated. In terms of processing, proteolytically cleaved at a conserved C-terminal proteolytic cleavage site to generate the secreted form found in urine. This cleavage is catalyzed by HPN. Detected in kidney and pancreas.

The protein localises to the apical cell membrane. It is found in the basolateral cell membrane. It localises to the cell projection. The protein resides in the cilium membrane. Its subcellular location is the secreted. Its function is as follows. Functions in biogenesis and organization of the apical membrane of epithelial cells of the thick ascending limb of Henle's loop (TALH), where it promotes formation of complex filamentous gel-like structure that may play a role in the water barrier permeability. May serve as a receptor for binding and endocytosis of cytokines (IL-1, IL-2) and TNF. Facilitates neutrophil migration across renal epithelia. In terms of biological role, in the urine, may contribute to colloid osmotic pressure, retards passage of positively charged electrolytes, and inhibits formation of liquid containing supersaturated salts and subsequent formation of salt crystals. Protects against urinary tract infections by binding to type 1 fimbriated E.coli. Binds to bacterial adhesin fimH which mediates the stable formation of bacterial aggregates, prevents the binding of E.coli to uroplakins UPK1A and UPK1B which act as urothelial receptors for type I fimbriae, and allows for pathogen clearance through micturation. Also promotes aggregation of other bacteria including K.pneumoniae, P.aeruginosa and S.mitis and so may also protect against other uropathogens. The sequence is that of Uromodulin (UMOD) from Canis lupus familiaris (Dog).